We begin with the raw amino-acid sequence, 83 residues long: Acyl carrier protein (83 aa).

The 76-residue stretch at 2-77 (STIEEKVKTI…AAIDFISNSH (76 aa)) folds into the Carrier domain. S37 is subject to O-(pantetheine 4'-phosphoryl)serine.

The protein belongs to the acyl carrier protein (ACP) family. Post-translationally, 4'-phosphopantetheine is transferred from CoA to a specific serine of apo-ACP by AcpS. This modification is essential for activity because fatty acids are bound in thioester linkage to the sulfhydryl of the prosthetic group.

The protein resides in the cytoplasm. Its pathway is lipid metabolism; fatty acid biosynthesis. In terms of biological role, carrier of the growing fatty acid chain in fatty acid biosynthesis. This is Acyl carrier protein from Blochmanniella pennsylvanica (strain BPEN).